The sequence spans 342 residues: MDILKSEILRKRQLVEDRNLLVENKKYFKRSELARKEEEAYYERCGYKIQPKEDDQKPLTSSNPVLELELAEEKLPMTLSRQEVIRRLRERGEPIRLFGETDYDAFQRLRKIEILTPEVNKGLRNDLKAALDKIDQQYLNEIVGGQEPGEEDTQNDLKVHEENTTIEELEALGESLGKGDDHKDMDIITKFLKFLLGVWAKELNAREDYVKRSVQGKLNSATQKQTESYLRPLFRKLRKRNLPADIKESITDIIKFMLQREYVKANDAYLQMAIGNAPWPIGVTMVGIHARTGREKIFSKHVAHVLNDETQRKYIQGLKRLMTICQKHFPTDPSKCVEYNAL.

The residue at position 1 (Met-1) is an N-acetylmethionine.

The protein belongs to the PRP18 family. In terms of assembly, heterodimer with PPIH. Interacts with PRPF4 and with the spliceosome. Part of a complex containing U4/U6 snRNPs.

The protein resides in the nucleus speckle. Functionally, participates in the second step of pre-mRNA splicing. In Mus musculus (Mouse), this protein is Pre-mRNA-splicing factor 18 (Prpf18).